We begin with the raw amino-acid sequence, 504 residues long: Maturase K (504 aa).

Belongs to the intron maturase 2 family. MatK subfamily.

The protein localises to the plastid. It is found in the chloroplast. Functionally, usually encoded in the trnK tRNA gene intron. Probably assists in splicing its own and other chloroplast group II introns. In Aucuba japonica (Japanese laurel), this protein is Maturase K.